The following is a 374-amino-acid chain: Regulator of G-protein signaling 20 (374 aa).

A compositionally biased stretch (polar residues) spans 1 to 11; the sequence is MPRLSQDNQQG. Disordered regions lie at residues 1–21 and 135–158; these read MPRL…RPSR and PPGG…PPMG. The span at 12 to 21 shows a compositional bias: basic residues; the sequence is HQKHFSRPSR. One can recognise an RGS domain in the interval 248–364; sequence SFDKLMLTPA…MNSALYKDLL (117 aa).

In terms of assembly, forms a complex with G(alpha)z/i2 subunits and mu-opioid receptors; the formation of this complex results in mu-opioid receptor desensitization. Interacts with OPRM1. Post-translationally, fatty acylated. Heavily palmitoylated in the cysteine string motif. N- and O-glycosylated in synapsomal membranes. In terms of processing, serine phosphorylated in synapsomal membranes. Post-translationally, sumoylated with SUMO1 and SUMO2 in synaptosomes. The sumoylated forms act as a scaffold for sequestering mu-opioid receptor-activated G(alpha) subunits. Retinal-specific. Expressed throughout the retina, including photoreceptors.

It localises to the membrane. It is found in the nucleus. The protein localises to the cytoplasm. Its function is as follows. Inhibits signal transduction by increasing the GTPase activity of G protein alpha subunits thereby driving them into their inactive GDP-bound form. Binds selectively to G(z)-alpha and G(alpha)-i2 subunits, accelerates their GTPase activity and regulates their signaling activities. The G(z)-alpha activity is inhibited by the phosphorylation and palmitoylation of the G-protein. Negatively regulates mu-opioid receptor-mediated activation of the G-proteins. The sequence is that of Regulator of G-protein signaling 20 (RGS20) from Bos taurus (Bovine).